The following is a 91-amino-acid chain: MAHKKGVGSSKNGRDSNPKYLGVKKFGGEAVVAGNILVRQRGTKFKPGANVGMGRDHTLFALVDGKVVFTNRGAKGRFISVEAAAPQVAAD.

Residues 1 to 20 (MAHKKGVGSSKNGRDSNPKY) are disordered.

This sequence belongs to the bacterial ribosomal protein bL27 family.

The sequence is that of Large ribosomal subunit protein bL27 from Deinococcus geothermalis (strain DSM 11300 / CIP 105573 / AG-3a).